Here is a 205-residue protein sequence, read N- to C-terminus: Large ribosomal subunit protein uL4 (205 aa).

The protein belongs to the universal ribosomal protein uL4 family. Part of the 50S ribosomal subunit.

In terms of biological role, one of the primary rRNA binding proteins, this protein initially binds near the 5'-end of the 23S rRNA. It is important during the early stages of 50S assembly. It makes multiple contacts with different domains of the 23S rRNA in the assembled 50S subunit and ribosome. Forms part of the polypeptide exit tunnel. This chain is Large ribosomal subunit protein uL4, found in Roseobacter denitrificans (strain ATCC 33942 / OCh 114) (Erythrobacter sp. (strain OCh 114)).